The following is a 275-amino-acid chain: 2,3,4,5-tetrahydropyridine-2,6-dicarboxylate N-succinyltransferase (275 aa).

The substrate site is built by arginine 107 and aspartate 144.

Belongs to the transferase hexapeptide repeat family. Homotrimer.

The protein resides in the cytoplasm. It carries out the reaction (S)-2,3,4,5-tetrahydrodipicolinate + succinyl-CoA + H2O = (S)-2-succinylamino-6-oxoheptanedioate + CoA. It participates in amino-acid biosynthesis; L-lysine biosynthesis via DAP pathway; LL-2,6-diaminopimelate from (S)-tetrahydrodipicolinate (succinylase route): step 1/3. The protein is 2,3,4,5-tetrahydropyridine-2,6-dicarboxylate N-succinyltransferase of Polynucleobacter asymbioticus (strain DSM 18221 / CIP 109841 / QLW-P1DMWA-1) (Polynucleobacter necessarius subsp. asymbioticus).